A 134-amino-acid polypeptide reads, in one-letter code: Phosphoribosyl-AMP cyclohydrolase (134 aa).

A Mg(2+)-binding site is contributed by Asp90. Zn(2+) is bound at residue Cys91. The Mg(2+) site is built by Asp92 and Asp94. 2 residues coordinate Zn(2+): Cys107 and Cys114.

Belongs to the PRA-CH family. In terms of assembly, homodimer. Mg(2+) serves as cofactor. The cofactor is Zn(2+).

The protein localises to the cytoplasm. It carries out the reaction 1-(5-phospho-beta-D-ribosyl)-5'-AMP + H2O = 1-(5-phospho-beta-D-ribosyl)-5-[(5-phospho-beta-D-ribosylamino)methylideneamino]imidazole-4-carboxamide. It participates in amino-acid biosynthesis; L-histidine biosynthesis; L-histidine from 5-phospho-alpha-D-ribose 1-diphosphate: step 3/9. Its function is as follows. Catalyzes the hydrolysis of the adenine ring of phosphoribosyl-AMP. The polypeptide is Phosphoribosyl-AMP cyclohydrolase (Arthrobacter sp. (strain FB24)).